Consider the following 290-residue polypeptide: ATP phosphoribosyltransferase (290 aa).

Belongs to the ATP phosphoribosyltransferase family. Long subfamily. It depends on Mg(2+) as a cofactor.

Its subcellular location is the cytoplasm. It carries out the reaction 1-(5-phospho-beta-D-ribosyl)-ATP + diphosphate = 5-phospho-alpha-D-ribose 1-diphosphate + ATP. The protein operates within amino-acid biosynthesis; L-histidine biosynthesis; L-histidine from 5-phospho-alpha-D-ribose 1-diphosphate: step 1/9. With respect to regulation, feedback inhibited by histidine. Its function is as follows. Catalyzes the condensation of ATP and 5-phosphoribose 1-diphosphate to form N'-(5'-phosphoribosyl)-ATP (PR-ATP). Has a crucial role in the pathway because the rate of histidine biosynthesis seems to be controlled primarily by regulation of HisG enzymatic activity. In Saccharolobus solfataricus (strain ATCC 35092 / DSM 1617 / JCM 11322 / P2) (Sulfolobus solfataricus), this protein is ATP phosphoribosyltransferase (hisG).